The chain runs to 816 residues: H(+)/Cl(-) exchange transporter 5 (816 aa).

The Cytoplasmic portion of the chain corresponds to 1-124 (MAMWQGAMDN…WALIHSVSDA (124 aa)). Transmembrane regions (helical) follow at residues 125–162 (FSGW…ICTG) and 208–231 (VNYF…VKAF). Positions 237 to 241 (GSGIP) match the Selectivity filter part_1 motif. Residue S238 participates in chloride binding. The segment at residues 240 to 247 (IPEIKTIL) is an intramembrane region (helical). Transmembrane regions (helical) follow at residues 256–275 (LGKW…VSSG) and 281–300 (EGPL…HCFN). Positions 279–283 (GKEGP) match the Selectivity filter part_2 motif. 2 intramembrane regions (helical) span residues 312-324 (VLSA…VSVA) and 328-336 (PIGGVLFSL). The next 5 helical transmembrane spans lie at 348 to 366 (LWRS…RSIN), 389 to 414 (LVPF…IAWC), 422 to 442 (LGKY…ILAF), 498 to 518 (MWQL…TFGM), and 523 to 542 (GLFI…LGVG). The Selectivity filter part_3 signature appears at 523-527 (GLFIP). F525 is a binding site for chloride. Residues 570–584 (GLYAMVGAAACLGGV) constitute an intramembrane region (helical). An intramembrane region (note=Loop between two helices) is located at residues 585–587 (TRM). The helical intramembrane region spans 588–599 (TVSLVVIMFELT). The segment at residues 600 to 604 (GGLEY) is an intramembrane region (note=Loop between two helices). A helical membrane pass occupies residues 605-622 (IVPLMAAAMTSKWVADAL). The Cytoplasmic portion of the chain corresponds to 623–816 (GREGIYDAHI…NQDPDSILFN (194 aa)). Chloride is bound at residue Y628. 2 consecutive CBS domains span residues 656–720 (MKPR…ARKK) and 752–812 (ILDL…DPDS). Residues T666, 687 to 689 (YSG), and 794 to 797 (TKKD) each bind ATP.

It belongs to the chloride channel (TC 2.A.49) family. ClC-5/CLCN5 subfamily. As to quaternary structure, interacts with NEDD4 and NEDD4L. Ubiquitinated by NEDD4L in the presence of albumin; which promotes endocytosis and proteasomal degradation. As to expression, kidney specific.

The protein localises to the golgi apparatus membrane. It is found in the endosome membrane. Its subcellular location is the cell membrane. The catalysed reaction is 2 chloride(in) + H(+)(out) = 2 chloride(out) + H(+)(in). Proton-coupled chloride transporter. Functions as antiport system and exchanges chloride ions against protons. Important for normal acidification of the endosome lumen. May play an important role in renal tubular function. The CLC channel family contains both chloride channels and proton-coupled anion transporters that exchange chloride or another anion for protons. The absence of conserved gating glutamate residues is typical for family members that function as channels. In Mus musculus (Mouse), this protein is H(+)/Cl(-) exchange transporter 5 (Clcn5).